Consider the following 137-residue polypeptide: Phosphoribosyl-AMP cyclohydrolase (137 aa).

A Mg(2+)-binding site is contributed by Asp-84. Cys-85 lines the Zn(2+) pocket. Positions 86 and 88 each coordinate Mg(2+). Zn(2+) is bound by residues Cys-101 and Cys-108.

This sequence belongs to the PRA-CH family. Homodimer. Requires Mg(2+) as cofactor. Zn(2+) is required as a cofactor.

It is found in the cytoplasm. It catalyses the reaction 1-(5-phospho-beta-D-ribosyl)-5'-AMP + H2O = 1-(5-phospho-beta-D-ribosyl)-5-[(5-phospho-beta-D-ribosylamino)methylideneamino]imidazole-4-carboxamide. The protein operates within amino-acid biosynthesis; L-histidine biosynthesis; L-histidine from 5-phospho-alpha-D-ribose 1-diphosphate: step 3/9. Its function is as follows. Catalyzes the hydrolysis of the adenine ring of phosphoribosyl-AMP. This is Phosphoribosyl-AMP cyclohydrolase from Chlorobaculum tepidum (strain ATCC 49652 / DSM 12025 / NBRC 103806 / TLS) (Chlorobium tepidum).